The following is a 435-amino-acid chain: Casein kinase I homolog 2 (435 aa).

One can recognise a Protein kinase domain in the interval 12–282; it reads YRVGRKIGEG…FLQELFDDVL (271 aa). ATP-binding positions include 18 to 26 and Lys-41; that span reads IGEGSFGVI. The Proton acceptor role is filled by Asp-131. A Phosphoserine modification is found at Ser-361.

This sequence belongs to the protein kinase superfamily. CK1 Ser/Thr protein kinase family. Casein kinase I subfamily.

It is found in the cytoplasm. The catalysed reaction is L-seryl-[protein] + ATP = O-phospho-L-seryl-[protein] + ADP + H(+). It catalyses the reaction L-threonyl-[protein] + ATP = O-phospho-L-threonyl-[protein] + ADP + H(+). Functionally, casein kinases are operationally defined by their preferential utilization of acidic proteins such as caseins as substrates. May contribute to the regulation of morphology. The protein is Casein kinase I homolog 2 (cki2) of Schizosaccharomyces pombe (strain 972 / ATCC 24843) (Fission yeast).